The following is a 682-amino-acid chain: Methionine--tRNA ligase (682 aa).

The 'HIGH' region signature appears at 15 to 25; it reads PYANGAIHLGH. Positions 146, 149, 159, and 162 each coordinate Zn(2+). Residues 331 to 335 carry the 'KMSKS' region motif; it reads KMSKS. An ATP-binding site is contributed by Lys334. One can recognise a tRNA-binding domain in the interval 580 to 682; that stretch reads DLAKLDMRVA…NGVTAGMQVK (103 aa).

This sequence belongs to the class-I aminoacyl-tRNA synthetase family. MetG type 1 subfamily. In terms of assembly, homodimer. The cofactor is Zn(2+).

The protein localises to the cytoplasm. It carries out the reaction tRNA(Met) + L-methionine + ATP = L-methionyl-tRNA(Met) + AMP + diphosphate. Functionally, is required not only for elongation of protein synthesis but also for the initiation of all mRNA translation through initiator tRNA(fMet) aminoacylation. The polypeptide is Methionine--tRNA ligase (Haemophilus influenzae (strain 86-028NP)).